A 558-amino-acid polypeptide reads, in one-letter code: 2-isopropylmalate synthase (558 aa).

The region spanning 30–303 (PIWCSVDLRD…DPGIDCSDIN (274 aa)) is the Pyruvate carboxyltransferase domain. Mg(2+) contacts are provided by D39, H242, H244, and N278. The segment at 437-558 (QPGARLKFLD…ANRIVGRKAR (122 aa)) is regulatory domain.

The protein belongs to the alpha-IPM synthase/homocitrate synthase family. LeuA type 2 subfamily. Homodimer. Mg(2+) serves as cofactor.

It localises to the cytoplasm. It catalyses the reaction 3-methyl-2-oxobutanoate + acetyl-CoA + H2O = (2S)-2-isopropylmalate + CoA + H(+). It functions in the pathway amino-acid biosynthesis; L-leucine biosynthesis; L-leucine from 3-methyl-2-oxobutanoate: step 1/4. Functionally, catalyzes the condensation of the acetyl group of acetyl-CoA with 3-methyl-2-oxobutanoate (2-ketoisovalerate) to form 3-carboxy-3-hydroxy-4-methylpentanoate (2-isopropylmalate). The sequence is that of 2-isopropylmalate synthase from Mesorhizobium japonicum (strain LMG 29417 / CECT 9101 / MAFF 303099) (Mesorhizobium loti (strain MAFF 303099)).